A 191-amino-acid polypeptide reads, in one-letter code: Ciliary microtubule-associated protein 3 (191 aa).

As to quaternary structure, interacts with proteins involved in ciliary transport, including ARL13B, CETN1, KIF3A, RAB6A, RAB8A, TUBB1 and TUBG1. Interacts with AURKA.

The protein resides in the cytoplasmic vesicle. It is found in the golgi apparatus. Its subcellular location is the trans-Golgi network. The protein localises to the cytoplasm. During primary cilia disassembly, involved in cilia disassembly. Required specifically to control cilia retraction as well as the liberation and duplication of the basal body/centrosome. May act by stimulating AURKA activity at the basal body in a cell cycle-dependent manner. The chain is Ciliary microtubule-associated protein 3 from Homo sapiens (Human).